Reading from the N-terminus, the 89-residue chain is Small ribosomal subunit protein uS15 (89 aa).

This sequence belongs to the universal ribosomal protein uS15 family. In terms of assembly, part of the 30S ribosomal subunit. Forms a bridge to the 50S subunit in the 70S ribosome, contacting the 23S rRNA.

Functionally, one of the primary rRNA binding proteins, it binds directly to 16S rRNA where it helps nucleate assembly of the platform of the 30S subunit by binding and bridging several RNA helices of the 16S rRNA. In terms of biological role, forms an intersubunit bridge (bridge B4) with the 23S rRNA of the 50S subunit in the ribosome. This is Small ribosomal subunit protein uS15 from Dictyoglomus turgidum (strain DSM 6724 / Z-1310).